Here is a 390-residue protein sequence, read N- to C-terminus: Nuclear receptor subfamily 2 group F member 6 (390 aa).

The segment covering 1–15 (MAMVTGGWGGPGGDT) has biased composition (gly residues). The tract at residues 1-50 (MAMVTGGWGGPGGDTNGVDKAGGSYPRATEDDSASPPGATSDAEPGDEER) is disordered. 2 positions are modified to phosphoserine: Ser-35 and Ser-41. The segment at residues 54-129 (QVDCVVCGDK…VGMRKEAVQP (76 aa)) is a DNA-binding region (nuclear receptor). 2 consecutive NR C4-type zinc fingers follow at residues 57-77 (CVVC…CEGC) and 93-117 (CRSN…LKKC). The region spanning 157–380 (PVSELIAQLL…TLIRDMLLSG (224 aa)) is the NR LBD domain. Positions 314-390 (LQEKAQVALT…STFNWPYGSG (77 aa)) are important for dimerization.

It belongs to the nuclear hormone receptor family. NR2 subfamily. Binds DNA as dimer; homodimer and heterodimer with NR2F2 and probably NR2F1. Interacts with THRB.

It localises to the nucleus. In terms of biological role, transcription factor predominantly involved in transcriptional repression. Binds to promoter/enhancer response elements that contain the imperfect 5'-AGGTCA-3' direct or inverted repeats with various spacings which are also recognized by other nuclear hormone receptors. Involved in modulation of hormonal responses. Represses transcriptional activity of the lutropin-choriogonadotropic hormone receptor/LHCGR gene, the renin/REN gene and the oxytocin-neurophysin/OXT gene. Represses the triiodothyronine-dependent and -independent transcriptional activity of the thyroid hormone receptor gene in a cell type-specific manner. The corepressing function towards thyroid hormone receptor beta/THRB involves at least in part the inhibition of THRB binding to triiodothyronine response elements (TREs) by NR2F6. Inhibits NFATC transcription factor DNA binding and subsequently its transcriptional activity. Acts as transcriptional repressor of IL-17 expression in Th-17 differentiated CD4(+) T cells and may be involved in induction and/or maintenance of peripheral immunological tolerance and autoimmunity. Involved in development of forebrain circadian clock; is required early in the development of the locus coeruleus (LC). The sequence is that of Nuclear receptor subfamily 2 group F member 6 (Nr2f6) from Rattus norvegicus (Rat).